The following is an 879-amino-acid chain: DNA replication licensing factor mcm3 (879 aa).

The 208-residue stretch at 306-513 (VFELLSTSLA…KDRALSEHVL (208 aa)) folds into the MCM domain. ATP is bound at residue 356–363 (GDPSTAKS). Positions 488 to 491 (SRFD) match the Arginine finger motif. The disordered stretch occupies residues 679-778 (RKKHKKQRLE…STLPATSREL (100 aa)). Over residues 690–713 (GEEFDSEDDNSDDMDIEESEEEMD) the composition is skewed to acidic residues. The span at 732–752 (TSQSQESGSEIGSSIAGTAGS) shows a compositional bias: low complexity. The span at 754–778 (NVGTSNTQLSWPSTHSTLPATSREL) shows a compositional bias: polar residues.

The protein belongs to the MCM family. As to quaternary structure, component of the mcm2-7 complex. The complex forms a toroidal hexameric ring with the proposed subunit order mcm2-mcm6-mcm4-mcm7-mcm3-mcm5. The heterodimers of mcm4/mcm6 and mcm3/mcm5 interact with mcm2 and mcm7.

The protein localises to the nucleus. The catalysed reaction is ATP + H2O = ADP + phosphate + H(+). Its function is as follows. Acts as a component of the mcm2-7 complex (mcm complex) which is the putative replicative helicase essential for 'once per cell cycle' DNA replication initiation and elongation in eukaryotic cells. The active ATPase sites in the mcm2-7 ring are formed through the interaction surfaces of two neighboring subunits such that a critical structure of a conserved arginine finger motif is provided in trans relative to the ATP-binding site of the Walker A box of the adjacent subunit. The six ATPase active sites, however, are likely to contribute differentially to the complex helicase activity. In Schizosaccharomyces pombe (strain 972 / ATCC 24843) (Fission yeast), this protein is DNA replication licensing factor mcm3 (mcm3).